Consider the following 80-residue polypeptide: Small, acid-soluble spore protein Tlp (80 aa).

Residues 34 to 73 (AKESMEFATDEEKQRIQEKNARRNESIESFRSEIQDESAA) show a composition bias toward basic and acidic residues. Residues 34 to 80 (AKESMEFATDEEKQRIQEKNARRNESIESFRSEIQDESAARENGYQS) are disordered.

This sequence belongs to the Tlp family.

It localises to the spore core. In Bacillus velezensis (strain DSM 23117 / BGSC 10A6 / LMG 26770 / FZB42) (Bacillus amyloliquefaciens subsp. plantarum), this protein is Small, acid-soluble spore protein Tlp.